The sequence spans 500 residues: MAWAALLGLLAALLLLLLLSRRRTRRPGEPPLDLGSIPWLGYALDFGKDAASFLTRMKEKHGDIFTILVGGRYVTVLLDPHSYDAVVWEPRTRLDFHAYAIFLMERIFDVQLPHYSPSDEKARMKLTLLHRELQALTEAMYTNLHAVLLGDATEAGSGWHEMGLLDFSYSFLLRAGYLTLYGIEALPRTHESQAQDRVHSADVFHTFRQLDRLLPKLARGSLSVGDKDHMCSVKSRLWKLLSPARLARRAHRSKWLESYLLHLEEMGVSEEMQARALVLQLWATQGNMGPAAFWLLLFLLKNPEALAAVRGELESILWQAEQPVSQTTTLPQKVLDSTPVLDSVLSESLRLTAAPFITREVVVDLAMPMADGREFNLRRGDRLLLFPFLSPQRDPEIYTDPEVFKYNRFLNPDGSEKKDFYKDGKRLKNYNMPWGAGHNHCLGRSYAVNSIKQFVFLVLVHLDLELINADVEIPEFDLSRYGFGLMQPEHDVPVRYRIRP.

Residues 1 to 20 form a helical membrane-spanning segment; it reads MAWAALLGLLAALLLLLLLS. Substrate contacts are provided by residues arginine 106, leucine 112, asparagine 287, 358 to 359, and arginine 382; that span reads TR. Cysteine 441 provides a ligand contact to heme.

Belongs to the cytochrome P450 family. The cofactor is heme. Widely expressed; particularly abundant in ovary, heart, skeletal muscle, lung and prostate.

The protein localises to the endoplasmic reticulum membrane. It carries out the reaction prostaglandin H2 = prostaglandin I2. It catalyses the reaction a hydroperoxyeicosatetraenoate = an oxoeicosatetraenoate + H2O. The enzyme catalyses (15S)-hydroperoxy-(5Z,8Z,11Z,13E)-eicosatetraenoate = 15-oxo-(5Z,8Z,11Z,13E)-eicosatetraenoate + H2O. The catalysed reaction is (15S)-hydroperoxy-(5Z,8Z,11Z,13E)-eicosatetraenoate + AH2 = (15S)-hydroxy-(5Z,8Z,11Z,13E)-eicosatetraenoate + A + H2O. Functionally, catalyzes the biosynthesis and metabolism of eicosanoids. Catalyzes the isomerization of prostaglandin H2 to prostacyclin (= prostaglandin I2), a potent mediator of vasodilation and inhibitor of platelet aggregation. Additionally, displays dehydratase activity, toward hydroperoxyeicosatetraenoates (HPETEs), especially toward (15S)-hydroperoxy-(5Z,8Z,11Z,13E)-eicosatetraenoate (15(S)-HPETE). In Homo sapiens (Human), this protein is Prostacyclin synthase (PTGIS).